A 748-amino-acid chain; its full sequence is Putative pre-mRNA-splicing factor ATP-dependent RNA helicase DHX32 (748 aa).

One can recognise a Helicase ATP-binding domain in the interval 74–240 (LEHLAHNQIV…YGNAPLVEAE (167 aa)). 87–94 (AGPKSGKS) serves as a coordination point for ATP. The Helicase C-terminal domain maps to 263–439 (RLLFEIHHTK…SMVLFLKRMD (177 aa)). The tract at residues 706 to 748 (SETKDLLQQDQTPDTPPTEEPREEEPLHEANDEGTAEQRCIIQ) is disordered.

The protein belongs to the DEAD box helicase family. DEAH subfamily.

The protein resides in the nucleus. The protein localises to the mitochondrion. It carries out the reaction ATP + H2O = ADP + phosphate + H(+). The chain is Putative pre-mRNA-splicing factor ATP-dependent RNA helicase DHX32 (dhx32) from Xenopus laevis (African clawed frog).